Here is a 440-residue protein sequence, read N- to C-terminus: Xylose isomerase (440 aa).

Residues His101 and Asp104 contribute to the active site. Mg(2+) is bound by residues Glu232, Glu268, His271, Asp296, Asp307, Asp309, and Asp339.

This sequence belongs to the xylose isomerase family. Homotetramer. Mg(2+) serves as cofactor.

The protein resides in the cytoplasm. The catalysed reaction is alpha-D-xylose = alpha-D-xylulofuranose. This Escherichia fergusonii (strain ATCC 35469 / DSM 13698 / CCUG 18766 / IAM 14443 / JCM 21226 / LMG 7866 / NBRC 102419 / NCTC 12128 / CDC 0568-73) protein is Xylose isomerase.